The sequence spans 328 residues: Ornithine transcarbamylase, mitochondrial (328 aa).

A mitochondrion-targeting transit peptide spans 1–6; sequence GGQPLQ. At K44 the chain carries N6-acetyllysine; alternate. K44 bears the N6-succinyllysine; alternate mark. K54 carries the N6-succinyllysine modification. At K62 the chain carries N6-acetyllysine; alternate. Position 62 is an N6-succinyllysine; alternate (K62). Carbamoyl phosphate is bound at residue 64-68; sequence STRTR. At S107 the chain carries Phosphoserine. A carbamoyl phosphate-binding site is contributed by R115. Residue R115 participates in L-ornithine binding. The residue at position 118 (K118) is an N6-acetyllysine; alternate. Position 118 is an N6-succinyllysine; alternate (K118). H142 provides a ligand contact to carbamoyl phosphate. Residue N173 coordinates L-ornithine. Residues K195, K205, and K212 each carry the N6-acetyllysine; alternate modification. N6-succinyllysine; alternate is present on residues K195, K205, and K212. 237-241 is a binding site for L-ornithine; the sequence is DTWIS. N6-succinyllysine is present on residues K248 and K263. Residue 276-279 participates in L-ornithine binding; it reads HCLP. Residue C277 is part of the active site. K281 carries the post-translational modification N6-acetyllysine; alternate. The residue at position 281 (K281) is an N6-succinyllysine; alternate. R304 lines the carbamoyl phosphate pocket. R304 serves as a coordination point for L-ornithine.

The protein belongs to the aspartate/ornithine carbamoyltransferase superfamily. OTCase family. In terms of assembly, homotrimer. Acetylation at Lys-62 negatively regulates ornithine carbamoyltransferase activity in response to nutrient signals.

It is found in the mitochondrion matrix. It carries out the reaction carbamoyl phosphate + L-ornithine = L-citrulline + phosphate + H(+). The protein operates within nitrogen metabolism; urea cycle; L-citrulline from L-ornithine and carbamoyl phosphate: step 1/1. With respect to regulation, negatively regulated by lysine acetylation. Its function is as follows. Catalyzes the second step of the urea cycle, the condensation of carbamoyl phosphate with L-ornithine to form L-citrulline. The urea cycle ensures the detoxification of ammonia by converting it to urea for excretion. The protein is Ornithine transcarbamylase, mitochondrial of Sus scrofa (Pig).